Here is a 485-residue protein sequence, read N- to C-terminus: Peroxisomal catalase (485 aa).

Catalysis depends on residues histidine 53 and asparagine 126. Tyrosine 336 is a binding site for heme.

This sequence belongs to the catalase family. Homotetramer. Heme is required as a cofactor.

It localises to the peroxisome matrix. The enzyme catalyses 2 H2O2 = O2 + 2 H2O. Functionally, catalyzes the degradation of hydrogen peroxide (H(2)O(2)) generated by peroxisomal oxidases to water and oxygen, thereby protecting cells from the toxic effects of hydrogen peroxide. The polypeptide is Peroxisomal catalase (POX9) (Candida tropicalis (Yeast)).